Consider the following 507-residue polypeptide: Serine/threonine-protein kinase BSK11 (507 aa).

The N-myristoyl glycine moiety is linked to residue G2. A compositionally biased stretch (basic and acidic residues) spans 16 to 26 (DKKITSDDLSG). The tract at residues 16-44 (DKKITSDDLSGRRGKGAKRGNRHRHANIN) is disordered. A compositionally biased stretch (basic residues) spans 27-41 (RRGKGAKRGNRHRHA). One can recognise a Protein kinase domain in the interval 75-332 (NAVVSVCSDQ…GDIISVITTL (258 aa)). Residues 81–89 (CSDQEPNLV) and K106 each bind ATP. The Proton acceptor role is filled by D200.

This sequence belongs to the protein kinase superfamily. Ser/Thr protein kinase family. Interacts with BRI1, ASK7/BIN2, BSK1, BSK6 and BSK8. Post-translationally, phosphorylated by BRI1, ASK7/BIN2 and ASK9/BIL2.

The protein resides in the cell membrane. The enzyme catalyses L-seryl-[protein] + ATP = O-phospho-L-seryl-[protein] + ADP + H(+). The catalysed reaction is L-threonyl-[protein] + ATP = O-phospho-L-threonyl-[protein] + ADP + H(+). Probable serine/threonine kinase that acts as a positive regulator of brassinosteroid (BR) signaling downstream of the receptor kinase BRI1. The sequence is that of Serine/threonine-protein kinase BSK11 from Arabidopsis thaliana (Mouse-ear cress).